The primary structure comprises 486 residues: Hydrogenobyrinate a,c-diamide synthase (486 aa).

The span at 254–272 shows a compositional bias: pro residues; the sequence is SPPPPLPVPSPGAAPPDPL. Residues 254–284 are disordered; the sequence is SPPPPLPVPSPGAAPPDPLVRPGRPRPQAPD. Positions 289–474 constitute a GATase cobBQ-type domain; that stretch reads RVAMASGAAF…LHTHWAAEPG (186 aa). The active-site Nucleophile is the C372.

This sequence belongs to the CobB/CbiA family. Requires Mg(2+) as cofactor.

The enzyme catalyses hydrogenobyrinate + 2 L-glutamine + 2 ATP + 2 H2O = hydrogenobyrinate a,c-diamide + 2 L-glutamate + 2 ADP + 2 phosphate + 2 H(+). The protein operates within cofactor biosynthesis; adenosylcobalamin biosynthesis; cob(II)yrinate a,c-diamide from precorrin-2 (aerobic route): step 9/10. Its function is as follows. Catalyzes the ATP-dependent amidation of the two carboxylate groups at positions a and c of hydrogenobyrinate, using either L-glutamine or ammonia as the nitrogen source. The sequence is that of Hydrogenobyrinate a,c-diamide synthase from Streptomyces coelicolor (strain ATCC BAA-471 / A3(2) / M145).